A 180-amino-acid polypeptide reads, in one-letter code: Large ribosomal subunit protein uL5 (180 aa).

It belongs to the universal ribosomal protein uL5 family. Part of the 50S ribosomal subunit; part of the 5S rRNA/L5/L18/L25 subcomplex. Contacts the 5S rRNA and the P site tRNA. Forms a bridge to the 30S subunit in the 70S ribosome.

In terms of biological role, this is one of the proteins that bind and probably mediate the attachment of the 5S RNA into the large ribosomal subunit, where it forms part of the central protuberance. In the 70S ribosome it contacts protein S13 of the 30S subunit (bridge B1b), connecting the 2 subunits; this bridge is implicated in subunit movement. Contacts the P site tRNA; the 5S rRNA and some of its associated proteins might help stabilize positioning of ribosome-bound tRNAs. The chain is Large ribosomal subunit protein uL5 from Ruminiclostridium cellulolyticum (strain ATCC 35319 / DSM 5812 / JCM 6584 / H10) (Clostridium cellulolyticum).